Here is a 769-residue protein sequence, read N- to C-terminus: Disintegrin and metalloproteinase domain-containing protein 11 (769 aa).

Residues 1–23 (MRLLRRWAFAALLLSLLPTPGLG) form the signal peptide. Positions 24 to 225 (TQGPAGALRW…PNRPRLRRKR (202 aa)) are excised as a propeptide. Residues 40-78 (GGPGAPEVTEPSRLVRESSGGEVRKQQLDTRVRQEPPGG) are disordered. The span at 61 to 73 (EVRKQQLDTRVRQ) shows a compositional bias: basic and acidic residues. Asn-96 and Asn-163 each carry an N-linked (GlcNAc...) asparagine glycan. The Extracellular segment spans residues 226-734 (QVRRGHPTVH…ERYKGPSGTN (509 aa)). The Peptidase M12B domain maps to 239-438 (KYVELIVIND…GGGSCLFNKP (200 aa)). The required for localization to cerebellar cortex basket cell terminals. Also required for localization of KCNA1, KCNA2, DLG4 and ADAM22 to cerebellar cortex basket cell terminal perisomatic axons and pinceaux stretch occupies residues 332–769 (GRTFQSTSSG…NIRRGRSGGA (438 aa)). Intrachain disulfides connect Cys-349–Cys-433, Cys-392–Cys-417, Cys-394–Cys-401, and Cys-503–Cys-523. One can recognise a Disintegrin domain in the interval 444–531 (PPECGNGFVE…QCPPNLHKLD (88 aa)). N-linked (GlcNAc...) asparagine glycosylation is found at Asn-605 and Asn-673. Disulfide bonds link Cys-677–Cys-692, Cys-686–Cys-698, and Cys-700–Cys-709. Positions 677–709 (CPGSGERRICSHHGVCSNEGKCICQPDWTGKDC) constitute an EGF-like domain. Residues 735 to 755 (IIIGSIAGAVLVAAIVLGGTG) traverse the membrane as a helical segment. The Cytoplasmic portion of the chain corresponds to 756–769 (WGFKNIRRGRSGGA).

In terms of assembly, interacts with LGI1 and LGI4. Interacts with KCNA1/KV1.1, KCNA2/KV1.2, DLG4/PSD-95 and ADAM22. In terms of processing, the precursor is cleaved by a furin endopeptidase. As to expression, expressed predominantly in brain. Slightly detected or not at all in other tissues.

It localises to the presynaptic cell membrane. The protein resides in the perikaryon. It is found in the cell projection. Its subcellular location is the axon. Probable ligand for integrin in the brain. This is a non catalytic metalloprotease-like protein. Required for localization of the potassium channel subunit proteins KCNA1/KV1.1 and KCNA2/KV1.2 at cerebellar cortex basket cell distal terminals, is thereby involved in ephaptic inhibitory synchronization of Purkinje cell firing and response to stress. Plays a role in spatial learning and motor coordination. Involved in the nociceptive pain response to chemical-derived stimulation. The sequence is that of Disintegrin and metalloproteinase domain-containing protein 11 (ADAM11) from Homo sapiens (Human).